A 650-amino-acid polypeptide reads, in one-letter code: Protein kinase domain-containing protein ppk38 (650 aa).

Residues 33 to 315 enclose the Protein kinase domain; the sequence is VTVKRYLAEG…MRNVPIHIYD (283 aa). 3 disordered regions span residues 344 to 442, 517 to 571, and 591 to 616; these read IHQS…PTTP, KVAA…PTNM, and RRVS…EKPM. Polar residues-rich tracts occupy residues 369 to 415 and 533 to 554; these read NVNS…NFRV and SVEN…SSNA.

This chain is Protein kinase domain-containing protein ppk38 (ppk38), found in Schizosaccharomyces pombe (strain 972 / ATCC 24843) (Fission yeast).